A 437-amino-acid polypeptide reads, in one-letter code: MADDPSAADRNVEIWKIKKLIKSLEAARGNGTSMISLIIPPKDQISRVAKMLADEFGTASNIKSRVNRLSVLGAITSVQQRLKLYNKVPPNGLVVYCGTIVTEEGKEKKVNIDFEPFKPINTSLYLCDNKFHTEALTALLSDDSKFGFIVIDGSGALFGTLQGNTREVLHKFTVDLPKKHGRGGQSALRFARLRMEKRHNYVRKVAETAVQLFISGDKVNVAGLVLAGSADFKTELSQSDMFDQRLQSKVLKLVDISYGGENGFNQAIELSTEVLSNVKFIQEKKLIGRYFGEISQDTGKYCFGVEDTLKALEMGAVEILIVYENLDIMRYVLHCQGTEEEKILYLTPEQEKDKSHFTDKETGQEHELIESMPLLEWFANNYKKFGATLEIVTDKSQEGSQFVKGFGGIGGILRYRVDFQGMEYQGGDDEFFDLDDY.

An N-acetylalanine modification is found at A2. Positions 61-64 (NIKS) match the NIKS motif; plays an important role in translational termination motif. K63 carries the post-translational modification 4-hydroxylysine. Residue K87 forms a Glycyl lysine isopeptide (Lys-Gly) (interchain with G-Cter in SUMO2) linkage. N5-methylglutamine is present on Q185. Position 347 is a phosphothreonine (T347). K404 participates in a covalent cross-link: Glycyl lysine isopeptide (Lys-Gly) (interchain with G-Cter in SUMO2).

The protein belongs to the eukaryotic release factor 1 family. In terms of assembly, component of the eRF1-eRF3-GTP ternary complex, composed of ETF1/ERF1 and eRF3 (GSPT1/ERF3A or GSPT2/ERF3B) and GTP. Component of the transient SURF (SMG1-UPF1-eRF1-eRF3) complex. Interacts with JMJD4. The ETF1-GSPT1 complex interacts with JMJD4. Post-translationally, hydroxylation at Lys-63 by JMJD4 promotes its translational termination efficiency. Methylated at Gln-185 by N6AMT1. In terms of processing, ubiquitinated via 'Lys-6'-linked polyubiquitin chains by RNF14 and RNF25 in response to ribosome collisions (ribosome stalling), leading to its degradation by the proteasome and rescue of stalled ribosomes.

It is found in the cytoplasm. Component of the eRF1-eRF3-GTP ternary complex, a ternary complex that mediates translation termination in response to the termination codons. The eRF1-eRF3-GTP complex binds to a stop codon in the ribosomal A-site. ETF1/ERF1 is responsible for stop codon recognition and inducing hydrolysis of peptidyl-tRNA. Following GTP hydrolysis, eRF3 (GSPT1/ERF3A or GSPT2/ERF3B) dissociates, permitting ETF1/eRF1 to accommodate fully in the A-site, followed by hydrolysis of peptidyl-tRNA. Component of the transient SURF complex which recruits UPF1 to stalled ribosomes in the context of nonsense-mediated decay (NMD) of mRNAs containing premature stop codons. Required for SHFL-mediated translation termination which inhibits programmed ribosomal frameshifting (-1PRF) of mRNA from viruses and cellular genes. This is Eukaryotic peptide chain release factor subunit 1 (ETF1) from Pongo abelii (Sumatran orangutan).